The chain runs to 509 residues: Maturase K (509 aa).

Belongs to the intron maturase 2 family. MatK subfamily.

The protein resides in the plastid. The protein localises to the chloroplast. In terms of biological role, usually encoded in the trnK tRNA gene intron. Probably assists in splicing its own and other chloroplast group II introns. This chain is Maturase K, found in Anthocercis viscosa (Sticky tailflower).